Here is a 1198-residue protein sequence, read N- to C-terminus: MAAAIGVRGRFELLSCSGPGWLISLSALLSVVARGALATTHWVVTEDGKIQQQVDSPMNLKHPHDLVILMRQETTVNYLKELEKQLVAQKIHIEENEDRDTGLEQRHNKEDPDCIKAKVPLGDLDLYDGTYITLESKDVRPEDFIDTESPVPPDPEQPDCTKILELPYSIHAFQHLRGVQERVNLSAPLLPKEDPIFTYLSKRLGRSIDDIGHLIHEGLQKNSSSWVLYNLASFYWRIKNEPYQVVECTMRALHFSSRHNKDIALVNLANVLHRAHFSADAAVVVHAALDDSAFFTSYYTLGNIYAMLGEYNHSVLCYDHALQAKPGFEQAIKRKHAVLCQQKLEQKLEAQHRSLQRTLNELKEYQKQHDHYLRQQEILEKHKLIQEEQILRNIIHETQMAKEAQLGNHQICRLVNQQHSLHCQWDQPVRYHRGDIFENVDYVQFGDDSSTSSMMSVNFDVPTNQSDVSESVRSSPVAHSVLWVWGRDSDAYRDKQHILWPKRADCTDSYPRVPLGGELPTYFLPPENKGLRIHELTSDDYSSEEEAQTPDCSITDFRKSHTLSYLVKELEVRMDLKAKIPDDHARKILLSRIKNYTIPEEEIGSFLFHAINKPNAPVWLILNEAGLYWRAVGNSTFAIACLQRALNLAPVQYQDIPLVNLANLLIHYGLHLDATKLLLQALAVNSSEPLTFLSLGNAYLALKNVSGALEAFRQALKLTTRCPECESSLKLIRCMQFYPFLYNITSSVCSGHCHEKTLDNSHDKQKYFAKPQSLDAAEEEPSRHGADEDPVLSVENAGRDSDALRLESTVVEESNGSDEVEKSEETKMSEEILALVDEFQQAWPLEGLGGTLEMKGRRLDLQGIRVLKKGPQDGVAKSSCYGDCRSEDDEATEWITFQVKRVKKPKGDHKKPPGKKVEASQAENGQRYQANLEITGPKVASPGPQEKKRDYQSMGWPSPDECLKLRWVELTAIVSTWLAVSSKNIDITEHIDFATPIQQPAMEPLCNGNLPTSMHTLDHLHGVSNRASLHYTGESQLTEVLQNLGKDQYPQQSLEQIGTRIAKVLEKNQTSWVLSSMAALYWRVKGQGKKAIDCLRQALHYAPHQMKDVPLISLANILHNAKLWNDAVVVATMAVEIAPHFAVNHFTLGNVYVAMEEFEKALVWYESTLKLQPEFVPAKNRIQTIQCHLMLKKGRRSP.

One copy of the TPR 1 repeat lies at 295–328; that stretch reads FTSYYTLGNIYAMLGEYNHSVLCYDHALQAKPGF. The stretch at 340-382 forms a coiled coil; sequence CQQKLEQKLEAQHRSLQRTLNELKEYQKQHDHYLRQQEILEKH. TPR repeat units lie at residues 619-652 and 689-722; these read WLILNEAGLYWRAVGNSTFAIACLQRALNLAPVQ and PLTFLSLGNAYLALKNVSGALEAFRQALKLTTRC. 2 disordered regions span residues 771–825 and 903–924; these read PQSL…KSEE and KKPKGDHKKPPGKKVEASQAEN. A compositionally biased stretch (basic residues) spans 903–914; sequence KKPKGDHKKPPG. TPR repeat units follow at residues 1071–1105, 1108–1141, and 1142–1175; these read SWVLSSMAALYWRVKGQGKKAIDCLRQALHYAPHQ, DVPLISLANILHNAKLWNDAVVVATMAVEIAPHF, and AVNHFTLGNVYVAMEEFEKALVWYESTLKLQPEF.

This sequence belongs to the TTC17 family. As to quaternary structure, interacts with CATIP. Expressed in germ cells as well as in somatic cells of the testis (at protein level). Ubiquitous.

It localises to the cytoplasm. The protein resides in the cell membrane. It is found in the cytoskeleton. Its function is as follows. Plays a role in primary ciliogenesis by modulating actin polymerization. This Rattus norvegicus (Rat) protein is Tetratricopeptide repeat protein 17 (Ttc17).